We begin with the raw amino-acid sequence, 250 residues long: MSRRYDSRTTIFSPEGRLYQVEYAMEAIGNAGSAIGILAKDGVVLIGEKKVTSKLLQTSTSTEKMYKIDDHVACAVAGIMSDANILINTARVQAQRYTFSYQEPMPVEQLVQSLCDTKQGYTQFGGLRPFGVSFLFAGWDKNYGFQLYMSDPSGNYGGWKATAIGANNQAAQSMLKQDYKDDVTREDAVKLALKALSKTMDSTSLTSEKLELAEVYLLPSGKVKYQVHSPESLNRLLTESGLTQPAAETS.

The protein belongs to the peptidase T1A family. As to quaternary structure, the 26S proteasome consists of a 20S proteasome core and two 19S regulatory subunits. The 20S proteasome core is composed of 28 subunits that are arranged in four stacked rings, resulting in a barrel-shaped structure. The two end rings are each formed by seven alpha subunits, and the two central rings are each formed by seven beta subunits. The catalytic chamber with the active sites is on the inside of the barrel.

It is found in the cytoplasm. The protein resides in the nucleus. Its function is as follows. The proteasome is a multicatalytic proteinase complex which is characterized by its ability to cleave peptides with Arg, Phe, Tyr, Leu, and Glu adjacent to the leaving group at neutral or slightly basic pH. The proteasome has an ATP-dependent proteolytic activity. The polypeptide is Proteasome subunit alpha type-4 (PAC1) (Spinacia oleracea (Spinach)).